We begin with the raw amino-acid sequence, 269 residues long: Capsid assembly scaffolding protein (269 aa).

It belongs to the T4likevirus capsid assembly scaffolding protein family.

The protein resides in the virion. Scaffolding protein involved in the icosahedric procapsid assembly. Coassembles with the capsid proteins to form the procapsid, in which the scaffolding protein is found within the external shell of icosahedrally arranged capsid protein subunits. In a subsequent step the scaffolding protein molecules are cleaved by the viral protease and released, except for the internal peptide VII. Its function is as follows. Cleavage product of Gp22 that is incorporated into the mature phage head. This is Capsid assembly scaffolding protein (22) from Enterobacteria phage T4 (Bacteriophage T4).